A 591-amino-acid polypeptide reads, in one-letter code: Aspartate--tRNA ligase (591 aa).

Position 172 (E172) interacts with L-aspartate. Residues Q196–K199 form an aspartate region. R218 contributes to the L-aspartate binding site. ATP is bound by residues R218–E220 and Q227. Residue H449 coordinates L-aspartate. E483 serves as a coordination point for ATP. L-aspartate is bound at residue R490. G535–R538 contributes to the ATP binding site.

It belongs to the class-II aminoacyl-tRNA synthetase family. Type 1 subfamily. In terms of assembly, homodimer.

Its subcellular location is the cytoplasm. The catalysed reaction is tRNA(Asp) + L-aspartate + ATP = L-aspartyl-tRNA(Asp) + AMP + diphosphate. In terms of biological role, catalyzes the attachment of L-aspartate to tRNA(Asp) in a two-step reaction: L-aspartate is first activated by ATP to form Asp-AMP and then transferred to the acceptor end of tRNA(Asp). The sequence is that of Aspartate--tRNA ligase from Actinobacillus pleuropneumoniae serotype 7 (strain AP76).